Consider the following 318-residue polypeptide: NADH-ubiquinone oxidoreductase chain 1 (318 aa).

Transmembrane regions (helical) follow at residues 3-23 (FINI…LTLV), 70-90 (LFII…IPLP), 100-120 (LGML…LWSG), 146-166 (MAII…QMLI), 171-191 (HIWL…STLA), 231-251 (IILM…HINY), 254-273 (LYST…FLWI), and 294-314 (LPLT…LAGI).

Belongs to the complex I subunit 1 family. Core subunit of respiratory chain NADH dehydrogenase (Complex I) which is composed of 45 different subunits.

It localises to the mitochondrion inner membrane. It catalyses the reaction a ubiquinone + NADH + 5 H(+)(in) = a ubiquinol + NAD(+) + 4 H(+)(out). Its function is as follows. Core subunit of the mitochondrial membrane respiratory chain NADH dehydrogenase (Complex I) which catalyzes electron transfer from NADH through the respiratory chain, using ubiquinone as an electron acceptor. Essential for the catalytic activity and assembly of complex I. The chain is NADH-ubiquinone oxidoreductase chain 1 from Rattus norvegicus (Rat).